The sequence spans 142 residues: MAKKVDGYIKLQVAAGAANPSPPVGPALGQKGVNIMEFCKAFNARTEKFEKGMPIPVVITVYTDRSFTFETKTPPASFLLLKAAGLKSGSGRPNTEKVGTIKRSAVQEIAETKAADMTGADIEAMTRSIEGTARSMGLVVED.

This sequence belongs to the universal ribosomal protein uL11 family. In terms of assembly, part of the ribosomal stalk of the 50S ribosomal subunit. Interacts with L10 and the large rRNA to form the base of the stalk. L10 forms an elongated spine to which L12 dimers bind in a sequential fashion forming a multimeric L10(L12)X complex. Post-translationally, one or more lysine residues are methylated.

Forms part of the ribosomal stalk which helps the ribosome interact with GTP-bound translation factors. This Shewanella loihica (strain ATCC BAA-1088 / PV-4) protein is Large ribosomal subunit protein uL11.